A 95-amino-acid polypeptide reads, in one-letter code: VSQLESAMESLIKVFHTYSSKEGDKYKLSKAELKSLLQGELNDFLSASKDPMVVEKIMSDLDENQDGEVDFQEFVVLVAALTVACNEFFIESMKN.

EF-hand domains lie at 12 to 47 (IKVF…FLSA) and 49 to 84 (KDPM…LTVA). K27, E32, D62, N64, D66, E68, and E73 together coordinate Ca(2+).

Belongs to the S-100 family. As to quaternary structure, dimer of either two alpha chains, or two beta chains, or one alpha and one beta chain. Also forms heterodimers with S100P. Interacts with AGER. Interacts with CAPZA1. Interacts with FKBP4. Interacts with RYR1 and RYR2. Interacts with CACYBP in a calcium-dependent manner. Interacts with PPP5C (via TPR repeats); the interaction is calcium-dependent and modulates PPP5C activity. Interacts with ATP2A2 and PLN in a Ca(2+)-dependent manner. Interacts with mitochondrial F1-ATPase subunits ATP5F1A and ATP5F1B; these interactions increase F1-ATPase activity. Post-translationally, glutathionylated; glutathionylation increases affinity to calcium about 10-fold.

It localises to the cytoplasm. It is found in the sarcoplasmic reticulum. The protein localises to the mitochondrion. In terms of biological role, small calcium binding protein that plays important roles in several biological processes such as Ca(2+) homeostasis, chondrocyte biology and cardiomyocyte regulation. In response to an increase in intracellular Ca(2+) levels, binds calcium which triggers conformational changes. These changes allow interactions with specific target proteins and modulate their activity. Regulates a network in cardiomyocytes controlling sarcoplasmic reticulum Ca(2+) cycling and mitochondrial function through interaction with the ryanodine receptors RYR1 and RYR2, sarcoplasmic reticulum Ca(2+)-ATPase/ATP2A2 and mitochondrial F1-ATPase. Facilitates diastolic Ca(2+) dissociation and myofilament mechanics in order to improve relaxation during diastole. This is Protein S100-A1 (s100a1) from Misgurnus fossilis (Weatherfish).